The chain runs to 86 residues: Small ribosomal subunit protein uS17 (86 aa).

This sequence belongs to the universal ribosomal protein uS17 family. As to quaternary structure, part of the 30S ribosomal subunit.

Its function is as follows. One of the primary rRNA binding proteins, it binds specifically to the 5'-end of 16S ribosomal RNA. The sequence is that of Small ribosomal subunit protein uS17 from Chlamydia pneumoniae (Chlamydophila pneumoniae).